The sequence spans 581 residues: Activating signal cointegrator 1 (581 aa).

Residue Ala-2 is modified to N-acetylalanine. The interval 100-121 (DQLKRSRRKGRNKQEVPAFPEP) is disordered. The C4-type zinc finger occupies 167-219 (GRHPCDCLGQKHKLINNCLVCGRIVCEQEGSGPCLFCGSLVCTNEEQDILQRD). Positions 200-300 (CLFCGSLVCT…ASDSNQWLSK (101 aa)) are mediates interaction with DDRGK1. At Ser-276 the chain carries Phosphoserine. Tyr-289 bears the Phosphotyrosine mark. The interval 300–400 (KVEREMLQKR…WVDNTGSTPQ (101 aa)) is mediates interaction with UFL1. Residues Lys-324 and Lys-334 each participate in a glycyl lysine isopeptide (Lys-Gly) (interchain with G-Cter in UFM1) cross-link. Residues 390 to 406 (QWVDNTGSTPQKKTSLS) are compositionally biased toward polar residues. A disordered region spans residues 390–410 (QWVDNTGSTPQKKTSLSAGPR). The ASCH domain occupies 437–531 (LSMHQPWASL…FQEQFPDISQ (95 aa)).

In terms of assembly, interacts with the thyroid hormone receptor/TR (via the ligand-binding domain); this interaction requires the presence of thyroid hormone. Interacts with the androgen receptor/AR; in an androgen, testosterone and dihydrotestosterone-dependent manner. Interacts with ESR1 (estrogen ligand-bound); competes with UFSP2. Interacts with UFSP2; competes with ligand-bound ESR1. Interacts with DDRGK1 and UFL1; the interaction with DDRGK1 is direct. Interacts with NCOA1. Interacts with EP300. Part of the ASC-1 complex, that contains TRIP4, ASCC1, ASCC2 and ASCC3. Identified in the RQT (ribosome quality control trigger) complex, that contains ASCC2, ASCC3 and TRIP4. Interacts with NEK6. Interacts with CSRP1. Interacts with ZCCHC4. In terms of processing, phosphorylated by NEK6. Post-translationally, polyufmylated by the UFM1-conjugating system composed of the enzymes UBA5, UFC1 and UFL1. Deufmylated by the protease UFSP2. Ufmylation of TRIP4 is promoted by ligand-bound nuclear receptors that compete with UFSP2 for interaction with TRIP4. Nuclear receptors-induced ufmylation promotes the recruitment of additional transcriptional coactivators like EP300 and NCOA1 and therefore the assembly of a coactivator complex facilitating nuclear receptor-mediated transcription. As to expression, ubiquitously expressed. Expressed in the spinal cord, brain, paraspinal ganglia, thyroid, and submandibular glands. Expressed at low level in all the muscles (at protein level) but with higher expression in axial than in limb muscles.

Its subcellular location is the nucleus. It is found in the cytoplasm. The protein resides in the cytosol. It localises to the cytoskeleton. The protein localises to the microtubule organizing center. Its subcellular location is the centrosome. Transcription coactivator which associates with nuclear receptors, transcriptional coactivators including EP300, CREBBP and NCOA1, and basal transcription factors like TBP and TFIIA to facilitate nuclear receptors-mediated transcription. May thereby play an important role in establishing distinct coactivator complexes under different cellular conditions. Plays a role in thyroid hormone receptor and estrogen receptor transactivation. Also involved in androgen receptor transactivation. Plays a pivotal role in the transactivation of NF-kappa-B, SRF and AP1. Acts as a mediator of transrepression between nuclear receptor and either AP1 or NF-kappa-B. May play a role in the development of neuromuscular junction. May play a role in late myogenic differentiation. Also functions as part of the RQC trigger (RQT) complex that activates the ribosome quality control (RQC) pathway, a pathway that degrades nascent peptide chains during problematic translation. The polypeptide is Activating signal cointegrator 1 (Mus musculus (Mouse)).